Reading from the N-terminus, the 221-residue chain is ATP-dependent Clp protease proteolytic subunit 3 (221 aa).

The Nucleophile role is filled by S118. Residue H143 is part of the active site.

Belongs to the peptidase S14 family. In terms of assembly, fourteen ClpP subunits assemble into 2 heptameric rings which stack back to back to give a disk-like structure with a central cavity, resembling the structure of eukaryotic proteasomes.

It is found in the cytoplasm. The catalysed reaction is Hydrolysis of proteins to small peptides in the presence of ATP and magnesium. alpha-casein is the usual test substrate. In the absence of ATP, only oligopeptides shorter than five residues are hydrolyzed (such as succinyl-Leu-Tyr-|-NHMec, and Leu-Tyr-Leu-|-Tyr-Trp, in which cleavage of the -Tyr-|-Leu- and -Tyr-|-Trp bonds also occurs).. Cleaves peptides in various proteins in a process that requires ATP hydrolysis. Has a chymotrypsin-like activity. Plays a major role in the degradation of misfolded proteins. The chain is ATP-dependent Clp protease proteolytic subunit 3 from Nocardia farcinica (strain IFM 10152).